The following is a 335-amino-acid chain: N-acetyl-gamma-glutamyl-phosphate reductase (335 aa).

Cys-156 is an active-site residue.

Belongs to the NAGSA dehydrogenase family. Type 1 subfamily.

It is found in the cytoplasm. It catalyses the reaction N-acetyl-L-glutamate 5-semialdehyde + phosphate + NADP(+) = N-acetyl-L-glutamyl 5-phosphate + NADPH + H(+). Its pathway is amino-acid biosynthesis; L-arginine biosynthesis; N(2)-acetyl-L-ornithine from L-glutamate: step 3/4. In terms of biological role, catalyzes the NADPH-dependent reduction of N-acetyl-5-glutamyl phosphate to yield N-acetyl-L-glutamate 5-semialdehyde. The sequence is that of N-acetyl-gamma-glutamyl-phosphate reductase from Aeromonas hydrophila subsp. hydrophila (strain ATCC 7966 / DSM 30187 / BCRC 13018 / CCUG 14551 / JCM 1027 / KCTC 2358 / NCIMB 9240 / NCTC 8049).